Reading from the N-terminus, the 705-residue chain is DNA ligase (705 aa).

Residues 43-47 (DAEYD), 92-93 (SL), and D123 contribute to the NAD(+) site. K125 serves as the catalytic N6-AMP-lysine intermediate. The NAD(+) site is built by R146, E184, K304, and K328. C422, C425, C440, and C445 together coordinate Zn(2+). The 90-residue stretch at 607 to 696 (TPVTPLAGKK…EEISGQAADD (90 aa)) folds into the BRCT domain. Residues 684–705 (SESEEISGQAADDYENSLLRVQ) form a disordered region.

Belongs to the NAD-dependent DNA ligase family. LigA subfamily. It depends on Mg(2+) as a cofactor. Mn(2+) is required as a cofactor.

It carries out the reaction NAD(+) + (deoxyribonucleotide)n-3'-hydroxyl + 5'-phospho-(deoxyribonucleotide)m = (deoxyribonucleotide)n+m + AMP + beta-nicotinamide D-nucleotide.. DNA ligase that catalyzes the formation of phosphodiester linkages between 5'-phosphoryl and 3'-hydroxyl groups in double-stranded DNA using NAD as a coenzyme and as the energy source for the reaction. It is essential for DNA replication and repair of damaged DNA. The polypeptide is DNA ligase (Oleidesulfovibrio alaskensis (strain ATCC BAA-1058 / DSM 17464 / G20) (Desulfovibrio alaskensis)).